Here is a 487-residue protein sequence, read N- to C-terminus: ATP-dependent RNA helicase DBP3 (487 aa).

Residues 1–40 (MAKRSRNMESNSERSSRPKKKSKGDAKPEQPPYVQSAELD) are disordered. The Q motif motif lies at 71 to 98 (TAFSYLPSDSNQLYGPLEHFSKPTPIQS). The Helicase ATP-binding domain occupies 101–276 (WPYLFAGRDV…TTFMKEPVTV (176 aa)). 114-121 (AETGSGKT) lines the ATP pocket. The short motif at 222–225 (DEAD) is the DEAD box element. Residues 291–456 (RIKQIVEVVK…DIPEALLKFG (166 aa)) form the Helicase C-terminal domain.

This sequence belongs to the DEAD box helicase family. DDX5/DBP2 subfamily.

It is found in the nucleus. The protein resides in the nucleolus. It catalyses the reaction ATP + H2O = ADP + phosphate + H(+). ATP-dependent RNA helicase required for 60S ribosomal subunit synthesis. Involved in efficient pre-rRNA processing, predominantly at site A3, which is necessary for the normal formation of 25S and 5.8S rRNAs. The sequence is that of ATP-dependent RNA helicase DBP3 (DBP3) from Ajellomyces capsulatus (strain NAm1 / WU24) (Darling's disease fungus).